The chain runs to 57 residues: Large ribosomal subunit protein eL20 (57 aa).

The protein belongs to the eukaryotic ribosomal protein eL20 family. In terms of assembly, part of the 50S ribosomal subunit. Binds 23S rRNA.

The sequence is that of Large ribosomal subunit protein eL20 from Halorhabdus utahensis (strain DSM 12940 / JCM 11049 / AX-2).